The following is a 140-amino-acid chain: Cell division protein SepF (140 aa).

The tract at residues 15–47 (DSQYEEPTEASQAAAPTESATNTRSTPKVVPMQ) is disordered.

The protein belongs to the SepF family. As to quaternary structure, homodimer. Interacts with FtsZ.

Its subcellular location is the cytoplasm. Cell division protein that is part of the divisome complex and is recruited early to the Z-ring. Probably stimulates Z-ring formation, perhaps through the cross-linking of FtsZ protofilaments. Its function overlaps with FtsA. In Lactiplantibacillus plantarum (strain ATCC BAA-793 / NCIMB 8826 / WCFS1) (Lactobacillus plantarum), this protein is Cell division protein SepF.